A 127-amino-acid chain; its full sequence is Prophage antitermination protein Q homolog QuuD (127 aa).

It belongs to the phage antitermination Q type 1 family.

Positively regulate expression of some phage genes. Bacterial host RNA polymerase modified by antitermination proteins transcribes through termination sites that otherwise prevent expression of the regulated genes. The protein is Prophage antitermination protein Q homolog QuuD (quuD) of Escherichia coli (strain K12).